A 356-amino-acid chain; its full sequence is RuBisCO accumulation factor 1 (356 aa).

The tract at residues 7-185 (ALTTEVLQRL…RQALEKLLTD (179 aa)) is N-terminal alpha-helix. The interval 209–342 (PYLVPVAGTA…LLLVLRPPQV (134 aa)) is C-terminal beta-sheet.

It belongs to the RAF family. As to quaternary structure, homodimer. Forms an RbcL(8)-Raf1(8) complex. Forms complexes of many stoichiometries with RbcL with and without RbcS. RbcX and Raf1 can bind simultaneously to RbcL.

The protein resides in the cytoplasm. In terms of biological role, a major RuBisCO chaperone. Acts after GroEL-GroES chaperonin to fold and/or assemble the large subunit of RuBisCO (ccbL, rbcL). Cooperates with RbcX in RbcL folding, plays the major role in assembly of dimers into RbcL(8)-Raf1(8) intermediate complexes. RbcS replaces Raf1, leading to holoenzyme formation. Its function is as follows. Required for optimal reconstitution of RuBisCO upon expression of rbcL-rbcS subunits in E.coli. Only interacts with the large subunit (cbbL, rbcL). Probably acts in the final stages of RuBisCO assembly, possibly participating in the addition of the small subunit (ccbS, rbcS). This Thermosynechococcus vestitus (strain NIES-2133 / IAM M-273 / BP-1) protein is RuBisCO accumulation factor 1.